A 305-amino-acid polypeptide reads, in one-letter code: Hydrogen peroxide-inducible genes activator (305 aa).

The HTH lysR-type domain maps to 1–58; that stretch reads MNIRDLEYLVALAEHRHFRRAADSCHVSQPTLSGQIRKLEDELGVMLLERTSRKVLFT. Positions 18–37 form a DNA-binding region, H-T-H motif; that stretch reads FRRAADSCHVSQPTLSGQIR. 2 disulfides stabilise this stretch: cysteine 180/cysteine 259 and cysteine 199/cysteine 208. A Cysteine sulfenic acid (-SOH); alternate modification is found at cysteine 199. Cysteine 199 carries the post-translational modification S-glutathionyl cysteine; alternate. Residue cysteine 199 is modified to S-nitrosocysteine; alternate.

Belongs to the LysR transcriptional regulatory family. In terms of assembly, homodimer and homotetramer. Oxidized on Cys-199; the Cys-SOH formed in response to oxidative signaling triggers a conformational change and the onset of transcriptional activity with a specific DNA-binding affinity. Cys-199-SOH rapidly reacts with Cys-208-SH to form a disulfide bond. In terms of processing, S-nitrosylation in response to nitrosative signaling triggers a conformational change and the onset of transcriptional activity with a specific DNA-binding affinity. Post-translationally, glutathionylation in response to redox signaling triggers the onset of transcriptional activity with a specific DNA-binding affinity.

Activated by oxidation of Cys-199 resulting in the alternative formation of cystine, sulfenic acid, S-nitroso- or glutathione-bound cysteine. Hydrogen peroxide sensor. Activates the expression of a regulon of hydrogen peroxide-inducible genes such as katG, gor, ahpC, ahpF, oxyS (a regulatory RNA), dps, fur and grxA. OxyR expression is negatively autoregulated by binding to a 43 bp region upstream of its own coding sequence. OxyR is inactivated by reduction of its essential disulfide bond by the product of GrxA, itself positively regulated by OxyR. Also has a positive regulatory effect on the production of surface proteins that control the colony morphology and auto-aggregation ability. In Escherichia coli O157:H7, this protein is Hydrogen peroxide-inducible genes activator (oxyR).